We begin with the raw amino-acid sequence, 343 residues long: MKLAVVLFNLGGPDGPEAVRPFLFNLFRDPAIIGLPAIARYPLAALISTTREKTAQANYAIMGGRSPLLPETEAQARALEAELARRAPDVEARAFIAMRYWRPLAKETARQVAAFAPDEIVLLPLYPQYSTTTTGSSVKDWARAYKGPGKSRTVCCYPNAPGLAEAHARLIRQTWEKAGKPSDIRLLFSAHGLPQKVVDAGDPYEAQVQASAAAVAALLPEFTDWGISYQSRVGPLKWLGPATDDEVRRAGAEGKGLLVSPIAFVSEHVETLVELDHEYAALAKESGVPVYLRAPAPGVAEPFIGTLAEAALGALDRSGAAPFGPWLCPAAHGRCACRNGGTA.

The Fe cation site is built by His191 and Glu270.

It belongs to the ferrochelatase family.

The protein resides in the cytoplasm. The catalysed reaction is heme b + 2 H(+) = protoporphyrin IX + Fe(2+). It participates in porphyrin-containing compound metabolism; protoheme biosynthesis; protoheme from protoporphyrin-IX: step 1/1. Functionally, catalyzes the ferrous insertion into protoporphyrin IX. The sequence is that of Ferrochelatase from Phenylobacterium zucineum (strain HLK1).